A 408-amino-acid chain; its full sequence is Argininosuccinate synthase (408 aa).

Residues 9-17 (AYSGGLDTS) and Ala36 each bind ATP. Residues Tyr87 and Ser92 each coordinate L-citrulline. Gly117 is an ATP binding site. Residues Thr119, Asn123, and Asp124 each coordinate L-aspartate. Asn123 serves as a coordination point for L-citrulline. L-citrulline is bound by residues Arg127, Ser176, Ser185, Glu261, and Tyr273.

The protein belongs to the argininosuccinate synthase family. Type 1 subfamily. In terms of assembly, homotetramer.

The protein resides in the cytoplasm. It carries out the reaction L-citrulline + L-aspartate + ATP = 2-(N(omega)-L-arginino)succinate + AMP + diphosphate + H(+). It functions in the pathway amino-acid biosynthesis; L-arginine biosynthesis; L-arginine from L-ornithine and carbamoyl phosphate: step 2/3. The chain is Argininosuccinate synthase from Deinococcus deserti (strain DSM 17065 / CIP 109153 / LMG 22923 / VCD115).